The following is a 432-amino-acid chain: Trigger factor (432 aa).

A PPIase FKBP-type domain is found at 161–246; it reads EDRVTIDFTG…LKKVEERELP (86 aa).

This sequence belongs to the FKBP-type PPIase family. Tig subfamily. Homodimer and monomer. In vivo most of the ribosomes are in complex with monomeric TF. Uncomplexed TF, however, is in a monomer-dimer equilibrium with approximately two thirds of TF existing in a dimeric state.

It localises to the cytoplasm. It catalyses the reaction [protein]-peptidylproline (omega=180) = [protein]-peptidylproline (omega=0). Involved in protein export. Acts as a chaperone by maintaining the newly synthesized protein in an open conformation. Functions as a peptidyl-prolyl cis-trans isomerase. This is Trigger factor from Escherichia coli O139:H28 (strain E24377A / ETEC).